Consider the following 120-residue polypeptide: uncharacterized protein (120 aa).

The protein to phage T4 y06Q.

This is an uncharacterized protein from Escherichia coli (strain K12).